A 732-amino-acid polypeptide reads, in one-letter code: E3 ubiquitin-protein ligase hel2 (732 aa).

The interval 1-48 (MSPSGPNLNNKEHNRASEKKNSRTHNKKTNRNQSKEKPVSSRSVETPK) is disordered. The span at 10-21 (NKEHNRASEKKN) shows a compositional bias: basic and acidic residues. Residues 81 to 121 (CFICAEGITYSCVLPCNHRMCHVCALRLRALYKTKECTFCK) form an RING-type zinc finger. The region spanning 245 to 315 (PKCEFCNTHF…RECLERKFVV (71 aa)) is the LIM zinc-binding domain. Disordered regions lie at residues 345–380 (IIPQ…NETA), 411–501 (DFGF…QHQQ), and 623–732 (HDGP…FHIG). 2 stretches are compositionally biased toward polar residues: residues 366–380 (SSTP…NETA) and 415–433 (TLSN…TRTI). The span at 457 to 468 (SSSAPSVPVSAP) shows a compositional bias: low complexity. S482 is subject to Phosphoserine. 2 stretches are compositionally biased toward polar residues: residues 490 to 501 (PMASSEQAQHQQ) and 629 to 654 (SAPS…NTPS). Low complexity predominate over residues 701 to 713 (STPNTSSNRNSNT).

This sequence belongs to the ZNF598/HEL2 family.

Its subcellular location is the cytoplasm. The enzyme catalyses S-ubiquitinyl-[E2 ubiquitin-conjugating enzyme]-L-cysteine + [acceptor protein]-L-lysine = [E2 ubiquitin-conjugating enzyme]-L-cysteine + N(6)-ubiquitinyl-[acceptor protein]-L-lysine.. Its pathway is protein modification; protein ubiquitination. E3 ubiquitin-protein ligase that plays a key role in the ribosome quality control (RQC), a pathway that takes place when a ribosome has stalled during translation, leading to degradation of nascent peptide chains. Activated when ribosomes are stalled within an mRNA following translation of prematurely polyadenylated mRNAs. Acts as a ribosome collision sensor: specifically recognizes and binds collided ribosome and ubiquitinates the 40S ribosomal proteins rps20/uS10 and rps3/uS3. Catalyzes 'Lys-63'-linked polyubiquitination of rps20/uS10, promoting recruitment of the RQT (ribosome quality control trigger) complex, which drives the disassembly of stalled ribosomes, followed by degradation of nascent peptides. This chain is E3 ubiquitin-protein ligase hel2, found in Schizosaccharomyces pombe (strain 972 / ATCC 24843) (Fission yeast).